We begin with the raw amino-acid sequence, 281 residues long: 3-hydroxyanthranilate 3,4-dioxygenase (281 aa).

Residues 1–162 are domain A (catalytic); sequence MSGVTAIEIP…SNEFKTGKPG (162 aa). Arg-45 provides a ligand contact to O2. Residues His-49, Glu-55, and His-93 each coordinate Fe cation. Glu-55 contributes to the substrate binding site. 2 residues coordinate substrate: Arg-97 and Glu-107. A linker region spans residues 163-179; it reads KGTFACNAPYEARWTDL. The interval 180–281 is domain B; sequence PVPINRKEFI…GFAITIRMPA (102 aa).

This sequence belongs to the 3-HAO family. Fe(2+) serves as cofactor.

The protein resides in the cytoplasm. It catalyses the reaction 3-hydroxyanthranilate + O2 = (2Z,4Z)-2-amino-3-carboxymuconate 6-semialdehyde. It participates in cofactor biosynthesis; NAD(+) biosynthesis; quinolinate from L-kynurenine: step 3/3. Catalyzes the oxidative ring opening of 3-hydroxyanthranilate to 2-amino-3-carboxymuconate semialdehyde, which spontaneously cyclizes to quinolinate. This is 3-hydroxyanthranilate 3,4-dioxygenase (haao-1) from Caenorhabditis elegans.